Reading from the N-terminus, the 143-residue chain is uncharacterized protein (143 aa).

4 consecutive transmembrane segments (helical) span residues 7–29, 52–74, 87–105, and 120–142; these read LFLFLHVVLATFWVGGMLFLSLV, FSLYGTFLSLFLLFVTGLVNTYL, LGVFFVVVFISLLHDLWAG, and WLGILNLILSLLLVYLGVRIRLG.

The protein resides in the cell membrane. This is an uncharacterized protein from Aquifex aeolicus (strain VF5).